A 440-amino-acid polypeptide reads, in one-letter code: UDP-N-acetylmuramoylalanine--D-glutamate ligase (440 aa).

109 to 115 (GTNGKTT) is a binding site for ATP.

This sequence belongs to the MurCDEF family.

The protein resides in the cytoplasm. The catalysed reaction is UDP-N-acetyl-alpha-D-muramoyl-L-alanine + D-glutamate + ATP = UDP-N-acetyl-alpha-D-muramoyl-L-alanyl-D-glutamate + ADP + phosphate + H(+). Its pathway is cell wall biogenesis; peptidoglycan biosynthesis. In terms of biological role, cell wall formation. Catalyzes the addition of glutamate to the nucleotide precursor UDP-N-acetylmuramoyl-L-alanine (UMA). This is UDP-N-acetylmuramoylalanine--D-glutamate ligase from Rubrobacter xylanophilus (strain DSM 9941 / JCM 11954 / NBRC 16129 / PRD-1).